The primary structure comprises 477 residues: Aspartyl/glutamyl-tRNA(Asn/Gln) amidotransferase subunit B (477 aa).

This sequence belongs to the GatB/GatE family. GatB subfamily. Heterotrimer of A, B and C subunits.

It catalyses the reaction L-glutamyl-tRNA(Gln) + L-glutamine + ATP + H2O = L-glutaminyl-tRNA(Gln) + L-glutamate + ADP + phosphate + H(+). The catalysed reaction is L-aspartyl-tRNA(Asn) + L-glutamine + ATP + H2O = L-asparaginyl-tRNA(Asn) + L-glutamate + ADP + phosphate + 2 H(+). In terms of biological role, allows the formation of correctly charged Asn-tRNA(Asn) or Gln-tRNA(Gln) through the transamidation of misacylated Asp-tRNA(Asn) or Glu-tRNA(Gln) in organisms which lack either or both of asparaginyl-tRNA or glutaminyl-tRNA synthetases. The reaction takes place in the presence of glutamine and ATP through an activated phospho-Asp-tRNA(Asn) or phospho-Glu-tRNA(Gln). The chain is Aspartyl/glutamyl-tRNA(Asn/Gln) amidotransferase subunit B from Ureaplasma parvum serovar 3 (strain ATCC 27815 / 27 / NCTC 11736).